The chain runs to 246 residues: ATP synthase subunit a (246 aa).

Residues 1-3 constitute a propeptide, removed in mature form; sequence MFY. Helical transmembrane passes span 20 to 40, 56 to 76, 82 to 102, 112 to 132, 138 to 158, 176 to 196, and 203 to 223; these read ILTL…SIIF, WGVA…SQIG, FFPL…ISMI, LVAI…LGLY, FFAL…LVLI, ANIL…VNLM, and FIGG…EVGI.

It belongs to the ATPase A chain family. In terms of assembly, F-type ATPases have 2 components, CF(1) - the catalytic core - and CF(0) - the membrane proton channel. CF(1) has five subunits: alpha(3), beta(3), gamma(1), delta(1), epsilon(1). CF(0) has three main subunits: a, b and c.

Its subcellular location is the mitochondrion inner membrane. Its function is as follows. Mitochondrial membrane ATP synthase (F(1)F(0) ATP synthase or Complex V) produces ATP from ADP in the presence of a proton gradient across the membrane which is generated by electron transport complexes of the respiratory chain. F-type ATPases consist of two structural domains, F(1) - containing the extramembraneous catalytic core and F(0) - containing the membrane proton channel, linked together by a central stalk and a peripheral stalk. During catalysis, ATP synthesis in the catalytic domain of F(1) is coupled via a rotary mechanism of the central stalk subunits to proton translocation. Key component of the proton channel; it may play a direct role in the translocation of protons across the membrane. This chain is ATP synthase subunit a (ATP6), found in Candida albicans (strain SC5314 / ATCC MYA-2876) (Yeast).